The following is a 320-amino-acid chain: Acetaldehyde dehydrogenase 2 (320 aa).

The Acyl-thioester intermediate role is filled by C129. NAD(+) is bound by residues 160–168 (SAGPGTRAN) and N287.

This sequence belongs to the acetaldehyde dehydrogenase family.

It catalyses the reaction acetaldehyde + NAD(+) + CoA = acetyl-CoA + NADH + H(+). The protein is Acetaldehyde dehydrogenase 2 of Burkholderia cenocepacia (strain ATCC BAA-245 / DSM 16553 / LMG 16656 / NCTC 13227 / J2315 / CF5610) (Burkholderia cepacia (strain J2315)).